The sequence spans 173 residues: 3-hydroxydecanoyl-[acyl-carrier-protein] dehydratase (173 aa).

Histidine 71 is an active-site residue.

Belongs to the thioester dehydratase family. FabA subfamily. Homodimer.

Its subcellular location is the cytoplasm. It catalyses the reaction a (3R)-hydroxyacyl-[ACP] = a (2E)-enoyl-[ACP] + H2O. The catalysed reaction is (3R)-hydroxydecanoyl-[ACP] = (2E)-decenoyl-[ACP] + H2O. It carries out the reaction (2E)-decenoyl-[ACP] = (3Z)-decenoyl-[ACP]. It functions in the pathway lipid metabolism; fatty acid biosynthesis. In terms of biological role, necessary for the introduction of cis unsaturation into fatty acids. Catalyzes the dehydration of (3R)-3-hydroxydecanoyl-ACP to E-(2)-decenoyl-ACP and then its isomerization to Z-(3)-decenoyl-ACP. Can catalyze the dehydratase reaction for beta-hydroxyacyl-ACPs with saturated chain lengths up to 16:0, being most active on intermediate chain length. The polypeptide is 3-hydroxydecanoyl-[acyl-carrier-protein] dehydratase (Baumannia cicadellinicola subsp. Homalodisca coagulata).